Consider the following 65-residue polypeptide: Large ribosomal subunit protein uL29 (65 aa).

The protein belongs to the universal ribosomal protein uL29 family.

The polypeptide is Large ribosomal subunit protein uL29 (Bacteroides thetaiotaomicron (strain ATCC 29148 / DSM 2079 / JCM 5827 / CCUG 10774 / NCTC 10582 / VPI-5482 / E50)).